A 221-amino-acid chain; its full sequence is Early nodulin-like protein 4 (221 aa).

Residues 1-21 (MVFVKMTDVYLMIVMLMGLGF) form the signal peptide. The Phytocyanin domain occupies 29–130 (HKFYVGGRDG…GQKLAVTVMS (102 aa)). 2 N-linked (GlcNAc...) asparagine glycosylation sites follow: N59 and N85. The cysteines at positions 84 and 118 are disulfide-linked. The interval 130–185 (STGHHSHTPRHPSPSPSPSASPVRKALLSPAPIPVHKALSSPAPTPGVDPSHSEVL) is disordered. A lipid anchor (GPI-anchor amidated asparagine) is attached at N197. A propeptide spans 198 to 221 (LAGSVAPGVISLGLVLVIMISSMV) (removed in mature form).

This sequence belongs to the early nodulin-like (ENODL) family. As to expression, confined to flowers.

It is found in the cell membrane. Functionally, may act as a carbohydrate transporter. The chain is Early nodulin-like protein 4 from Arabidopsis thaliana (Mouse-ear cress).